The following is a 251-amino-acid chain: Flap endonuclease Xni (251 aa).

D104 contributes to the Mg(2+) binding site. Positions 160–249 (VLPRQLPDYW…IDGNLQQLRL (90 aa)) constitute a 5'-3' exonuclease domain. Residues L171, A172, P180, V182, and I185 each coordinate K(+). The interaction with DNA stretch occupies residues 184-189 (GIGPKS).

It belongs to the Xni family. Mg(2+) is required as a cofactor. The cofactor is K(+).

In terms of biological role, has flap endonuclease activity. During DNA replication, flap endonucleases cleave the 5'-overhanging flap structure that is generated by displacement synthesis when DNA polymerase encounters the 5'-end of a downstream Okazaki fragment. The sequence is that of Flap endonuclease Xni from Salmonella heidelberg (strain SL476).